Consider the following 544-residue polypeptide: MARFIFITGGVVSSLGKGLMAASLAALLQERGFRVRIRKFDPYLNVDPGTMSPYQHGEVYVTDDGAETDLDLGHYERFSGVPSRRSDNITSGRIYQNIIAKERRGDYLGATVQVIPHVTDAIKDFARDDTDDLDFVLCEIGGTVGDIESLPFIEAIRQLKNDLGRGNVVFVHLTLVPYIAAAGELKTKPTQHSVRDLTSFGIQPDVLVCRTEHPLPDSERSKIALFCNVPKEAVIPALDAKSIYDVPLHYHAEGLDKAVLSAFGLNIETPLDLHRWKEISDRLANPEGEVTIGVVGKYVGLQDAYKSLHEALVHGGIANRVKVNIVWLDAEMFEGNNPEAAEALSSLHAILVPGGFGERGSEGKIAAVKFAREHKVPFFGICLGMQMACIEGARNTAGLKKASSSEFGPSEEPVIGLITEWERDGEREERAADGDLGGTMRLGAYPAVLKAGSQVAEIYNSREITERHRHRYEVNIHYKEPLEKGGLVFSGMSPDGLLPEIVERPDHPWFIGVQFHPELKSKPFDPHPLFSDFVAAALKQSRLV.

Positions 1–265 are amidoligase domain; it reads MARFIFITGG…DKAVLSAFGL (265 aa). Ser-13 is a binding site for CTP. Ser-13 contacts UTP. 14 to 19 provides a ligand contact to ATP; that stretch reads SLGKGL. Tyr-54 contacts L-glutamine. Asp-71 contacts ATP. Positions 71 and 139 each coordinate Mg(2+). CTP contacts are provided by residues 146–148, 186–191, and Lys-222; these read DIE and KTKPTQ. Residues 186 to 191 and Lys-222 contribute to the UTP site; that span reads KTKPTQ. The region spanning 291–543 is the Glutamine amidotransferase type-1 domain; the sequence is TIGVVGKYVG…VAAALKQSRL (253 aa). Gly-355 lines the L-glutamine pocket. Catalysis depends on Cys-382, which acts as the Nucleophile; for glutamine hydrolysis. Residues 383-386, Glu-406, and Arg-471 each bind L-glutamine; that span reads LGMQ. Residues His-516 and Glu-518 contribute to the active site.

This sequence belongs to the CTP synthase family. In terms of assembly, homotetramer.

The enzyme catalyses UTP + L-glutamine + ATP + H2O = CTP + L-glutamate + ADP + phosphate + 2 H(+). It catalyses the reaction L-glutamine + H2O = L-glutamate + NH4(+). It carries out the reaction UTP + NH4(+) + ATP = CTP + ADP + phosphate + 2 H(+). The protein operates within pyrimidine metabolism; CTP biosynthesis via de novo pathway; CTP from UDP: step 2/2. Allosterically activated by GTP, when glutamine is the substrate; GTP has no effect on the reaction when ammonia is the substrate. The allosteric effector GTP functions by stabilizing the protein conformation that binds the tetrahedral intermediate(s) formed during glutamine hydrolysis. Inhibited by the product CTP, via allosteric rather than competitive inhibition. Catalyzes the ATP-dependent amination of UTP to CTP with either L-glutamine or ammonia as the source of nitrogen. Regulates intracellular CTP levels through interactions with the four ribonucleotide triphosphates. This is CTP synthase from Zymomonas mobilis subsp. mobilis (strain ATCC 31821 / ZM4 / CP4).